Reading from the N-terminus, the 2439-residue chain is Mucin-6 (2439 aa).

The first 22 residues, 1-22, serve as a signal peptide directing secretion; that stretch reads MVQRWLLLSCCGALLSAGLANT. The VWFD 1 domain maps to 43 to 214; it reads GQCSTWGAGH…KLDDPGEICT (172 aa). Cystine bridges form between Cys-45-Cys-176 and Cys-67-Cys-213. Asn-268 carries an N-linked (GlcNAc...) asparagine glycan. The TIL domain occupies 302 to 357; the sequence is CPANQVYQECGSACVKTCSNPQHSCSSSCTFGCFCPEGTVLNDLSNNHTCVPVTQC. The region spanning 395-579 is the VWFD 2 domain; that stretch reads GHCSLEGGSF…ALERETDPCS (185 aa). 2 disulfides stabilise this stretch: Cys-397-Cys-533 and Cys-419-Cys-578. 2 N-linked (GlcNAc...) asparagine glycosylation sites follow: Asn-486 and Asn-659. The VWFD 3 domain maps to 866-1038; that stretch reads STCTLYGEGH…NSWKESPLCG (173 aa). 4 cysteine pairs are disulfide-bonded: Cys-868–Cys-1002, Cys-890–Cys-1037, Cys-899–Cys-999, and Cys-917–Cys-924. Residues Asn-975 and Asn-1179 are each glycosylated (N-linked (GlcNAc...) asparagine). 8 disordered regions span residues 1202–1455, 1471–1626, 1642–1834, 1868–1983, 2033–2077, 2090–2196, 2233–2278, and 2323–2348; these read PQPP…TSLV, ATSA…LVTP, SASI…HPHT, SIHS…STGP, ATSA…THSS, SSSW…SASP, VSPT…SLTT, and LTAH…SPGV. Over residues 1224–1265 the composition is skewed to low complexity; that stretch reads TGTSTTIGLLSSTGPSPSSNHTPASPTQTPLLPATLTSSKPT. Over residues 1276-1286 the composition is skewed to polar residues; it reads TAVTPQATSGL. A compositionally biased stretch (low complexity) spans 1294 to 1339; the sequence is STATKPTVTQATTRATASTASPATTSTAQSTTRTTMTLPTPATSGT. Residues 1340–1351 show a composition bias toward polar residues; the sequence is SPTLPKSTNQEL. 2 stretches are compositionally biased toward low complexity: residues 1352–1373 and 1381–1415; these read PGTT…TGPT and TRPT…AGSP. Polar residues-rich tracts occupy residues 1416 to 1455, 1471 to 1481, and 1490 to 1520; these read VPST…TSLV, ATSASNHSAPT, and LKAT…STNK. Composition is skewed to low complexity over residues 1521–1567 and 1574–1611; these read TPTS…ATSS and TTHS…PQTT. One copy of the 1; truncated repeat lies at 1561–1738; that stretch reads TNSATSSRPP…TTSGTSQSRS (178 aa). Residues 1607 to 1953 are approximate repeats; sequence HPQTTLPTHV…STGTRTPVAH (347 aa). Polar residues predominate over residues 1659–1686; it reads LKATGSTHTAPTMTLTTSGTSQALSSLN. Over residues 1687 to 1768 the composition is skewed to low complexity; sequence TAKTSTSLHS…PEVTSTSTTS (82 aa). A compositionally biased stretch (polar residues) spans 1769–1793; sequence ITPNHTSTGTRTPVAHTTSATSSRL. Residues 1785 to 1953 form repeat 2; that stretch reads TTSATSSRLP…STGTRTPVAH (169 aa). 2 stretches are compositionally biased toward low complexity: residues 1794 to 1834 and 1891 to 1917; these read PTPF…HPHT and TAPP…TSTS. Polar residues predominate over residues 1918–1962; it reads LPYHTSSTHHPEVTPTSTTNITPKHTSTGTRTPVAHTTSASSSRL. Residues 1963–1983 are compositionally biased toward low complexity; the sequence is PTPFTTHSPPTGSSPFSSTGP. A compositionally biased stretch (polar residues) spans 2052 to 2070; it reads LKATGSTHTAPPMTVTTSG. Positions 2090–2102 are enriched in low complexity; that stretch reads SSSWLPQNSSSRP. The segment covering 2107–2120 has biased composition (polar residues); the sequence is ITTQLPHLSSATTP. Positions 2121–2196 are enriched in low complexity; the sequence is VSTTNQLSSS…PTTASVSASP (76 aa). A compositionally biased stretch (polar residues) spans 2240 to 2264; it reads HLASSTIAFPSTPRTTASTHTAPAF. Over residues 2265 to 2278 the composition is skewed to low complexity; sequence SSQSTTSRSTSLTT. Over residues 2323–2347 the composition is skewed to polar residues; it reads LTAHGSTPASAPVSSLGTPTPTSPG. Intrachain disulfides connect Cys-2349/Cys-2396, Cys-2363/Cys-2410, Cys-2372/Cys-2430, and Cys-2376/Cys-2432. The region spanning 2349-2438 is the CTCK domain; that stretch reads CSVREQQEEI…HCVCSSVACG (90 aa).

In terms of assembly, multimer; disulfide-linked. Post-translationally, O-glycosylated. As to expression, expressed in the regenerative zone of gastric antrum, gastric body mucosa and gastric incisura mucosa. Expressed in the deeper mucous glands of gastric antrum. Overexpressed in Helicobacter pylori infected gastric epithelium. Highly expressed in duodenal Brunner's glands, gall bladder, seminal vesicle, pancreatic centroacinar cells and ducts, and periductal glands of the common bile duct.

The protein resides in the secreted. In terms of biological role, may provide a mechanism for modulation of the composition of the protective mucus layer related to acid secretion or the presence of bacteria and noxious agents in the lumen. Plays an important role in the cytoprotection of epithelial surfaces and are used as tumor markers in a variety of cancers. May play a role in epithelial organogenesis. This Homo sapiens (Human) protein is Mucin-6 (MUC6).